The chain runs to 640 residues: Biosynthetic arginine decarboxylase (640 aa).

Lys109 carries the post-translational modification N6-(pyridoxal phosphate)lysine. Substrate is bound at residue 291 to 301 (LDVGGGLGVDY).

Belongs to the Orn/Lys/Arg decarboxylase class-II family. SpeA subfamily. Mg(2+) is required as a cofactor. Pyridoxal 5'-phosphate serves as cofactor.

The enzyme catalyses L-arginine + H(+) = agmatine + CO2. It functions in the pathway amine and polyamine biosynthesis; agmatine biosynthesis; agmatine from L-arginine: step 1/1. Functionally, catalyzes the biosynthesis of agmatine from arginine. In Synechococcus sp. (strain RCC307), this protein is Biosynthetic arginine decarboxylase.